The sequence spans 101 residues: Small ribosomal subunit protein uS14 (101 aa).

Residues 51-70 (LPRDSSPSRQRNRCSQTGRP) are disordered. The span at 52–68 (PRDSSPSRQRNRCSQTG) shows a compositional bias: polar residues.

The protein belongs to the universal ribosomal protein uS14 family. In terms of assembly, part of the 30S ribosomal subunit. Contacts proteins S3 and S10.

In terms of biological role, binds 16S rRNA, required for the assembly of 30S particles and may also be responsible for determining the conformation of the 16S rRNA at the A site. This is Small ribosomal subunit protein uS14 from Mannheimia succiniciproducens (strain KCTC 0769BP / MBEL55E).